We begin with the raw amino-acid sequence, 383 residues long: Probable tRNA sulfurtransferase (383 aa).

One can recognise a THUMP domain in the interval 58-158 (NEIIHILKMI…ENKSYVWFDK (101 aa)). Residues 176-177 (LL), 201-202 (TF), R259, G281, and Q290 contribute to the ATP site.

It belongs to the ThiI family.

The protein localises to the cytoplasm. The enzyme catalyses [ThiI sulfur-carrier protein]-S-sulfanyl-L-cysteine + a uridine in tRNA + 2 reduced [2Fe-2S]-[ferredoxin] + ATP + H(+) = [ThiI sulfur-carrier protein]-L-cysteine + a 4-thiouridine in tRNA + 2 oxidized [2Fe-2S]-[ferredoxin] + AMP + diphosphate. It catalyses the reaction [ThiS sulfur-carrier protein]-C-terminal Gly-Gly-AMP + S-sulfanyl-L-cysteinyl-[cysteine desulfurase] + AH2 = [ThiS sulfur-carrier protein]-C-terminal-Gly-aminoethanethioate + L-cysteinyl-[cysteine desulfurase] + A + AMP + 2 H(+). Its pathway is cofactor biosynthesis; thiamine diphosphate biosynthesis. In terms of biological role, catalyzes the ATP-dependent transfer of a sulfur to tRNA to produce 4-thiouridine in position 8 of tRNAs, which functions as a near-UV photosensor. Also catalyzes the transfer of sulfur to the sulfur carrier protein ThiS, forming ThiS-thiocarboxylate. This is a step in the synthesis of thiazole, in the thiamine biosynthesis pathway. The sulfur is donated as persulfide by IscS. In Malacoplasma penetrans (strain HF-2) (Mycoplasma penetrans), this protein is Probable tRNA sulfurtransferase.